Here is a 178-residue protein sequence, read N- to C-terminus: Large ribosomal subunit protein uL6 (178 aa).

Belongs to the universal ribosomal protein uL6 family. Part of the 50S ribosomal subunit.

Its function is as follows. This protein binds to the 23S rRNA, and is important in its secondary structure. It is located near the subunit interface in the base of the L7/L12 stalk, and near the tRNA binding site of the peptidyltransferase center. This chain is Large ribosomal subunit protein uL6, found in Frankia alni (strain DSM 45986 / CECT 9034 / ACN14a).